The following is a 306-amino-acid chain: UDP-3-O-acyl-N-acetylglucosamine deacetylase (306 aa).

Zn(2+) is bound by residues His79, His238, and Asp242. The Proton donor role is filled by His265.

Belongs to the LpxC family. Zn(2+) is required as a cofactor.

It carries out the reaction a UDP-3-O-[(3R)-3-hydroxyacyl]-N-acetyl-alpha-D-glucosamine + H2O = a UDP-3-O-[(3R)-3-hydroxyacyl]-alpha-D-glucosamine + acetate. Its pathway is glycolipid biosynthesis; lipid IV(A) biosynthesis; lipid IV(A) from (3R)-3-hydroxytetradecanoyl-[acyl-carrier-protein] and UDP-N-acetyl-alpha-D-glucosamine: step 2/6. Functionally, catalyzes the hydrolysis of UDP-3-O-myristoyl-N-acetylglucosamine to form UDP-3-O-myristoylglucosamine and acetate, the committed step in lipid A biosynthesis. The protein is UDP-3-O-acyl-N-acetylglucosamine deacetylase of Yersinia pseudotuberculosis serotype O:1b (strain IP 31758).